Reading from the N-terminus, the 272-residue chain is Short-chain dehydrogenase srdC (272 aa).

Isoleucine 15, aspartate 65, arginine 127, tyrosine 173, lysine 177, valine 206, and threonine 208 together coordinate NADP(+). The active-site Proton donor is the tyrosine 173. The Lowers pKa of active site Tyr role is filled by lysine 177.

The protein belongs to the short-chain dehydrogenases/reductases (SDR) family.

Short-chain dehydrogenase; part of the gene cluster that mediates the biosynthesis of sordarial, a salicylic aldehyde structurally related to the phytotoxin pyriculol. The most interesting aspect of this pathway is formation of an aromatic product from the highly reducing polyketide synthase srdA. SrdA synthesizes a reduced polyketide chain from one molecule of acetyl-CoA and five molecules of malonyl-CoA. The polyketide chain is then reductively released as an aldehyde. The oxidoreductases srdC, srdD and srdE then oxidize one of the hydroxy groups to facilitate the intramolecular aldol condensation, followed by dehydration to yield a salicylic aldehyde. This aldehyde can undergo facile reduction by endogenous reductases to yield the alcohol 1-hydroxy-2-hydroxymethyl-3-pent-1,3-dienylbenzene. The flavin-dependent srdI counteract against the propensity of the aldehydes to be reduced under physiological conditions and is responsible for reoxidizing 1-hydroxy-2-hydroxymethyl-3-pent-1,3-dienylbenzene back to the salicylic aldehyde. This salicylic aldehyde is then selectively epoxidized by the cupin-domain-containing oxidoreductase srdB to yield the epoxide, which can be hydrolyzed stereoselectively by the hydrolase srdG to give the final product sordarial. This is Short-chain dehydrogenase srdC from Neurospora crassa (strain ATCC 24698 / 74-OR23-1A / CBS 708.71 / DSM 1257 / FGSC 987).